The primary structure comprises 274 residues: Protein bax (274 aa).

Positions Thr-32–Leu-64 are enriched in polar residues. Positions Thr-32–Thr-74 are disordered. ATP is bound at residue Gly-247 to Ser-254.

This is Protein bax (bax) from Escherichia coli (strain K12).